Reading from the N-terminus, the 179-residue chain is Stathmin-2 (179 aa).

The tract at residues 1-26 (MAKTAMAYKEKMKELSMLSLICSCFY) is membrane attachment. A Phosphoserine modification is found at Ser16. S-palmitoyl cysteine attachment occurs at residues Cys22 and Cys24. The region spanning 38–179 (DDMEVKQINK…NKELQVELSG (142 aa)) is the SLD domain. The interval 39-96 (DMEVKQINKRASGQAFELILKPPSPISEAPRTLASPKKKDLSLEEIQKKLEAAEERRK) is regulatory/phosphorylation domain. Phosphoserine is present on residues Ser50, Ser62, Ser73, and Ser97. Residues 75–179 (KKKDLSLEEI…NKELQVELSG (105 aa)) adopt a coiled-coil conformation.

The protein belongs to the stathmin family. In terms of assembly, interacts with MAPK8. Interacts with ITM2C. Interacts with KIFBP. Interacts (via the N-terminal region) with CIB1 (via C-terminal region); the interaction is direct, occurs in a calcium-dependent manner and attenuates the neurite outgrowth inhibition of STMN2. Sumoylated. In terms of processing, phosphorylated mostly by MAPK8, but also by MAPK9 and MAPK10 in the developing brain cortex. Post-translationally, N-terminal palmitoylation promotes specific anchoring to the cytosolic leaflet of Golgi membranes and subsequent vesicular trafficking along dendrites and axons. Neuronal Stathmins are substrates for palmitoyltransferases ZDHHC3, ZDHHC7 and ZDHHC15. In terms of tissue distribution, neuron specific.

It is found in the cytoplasm. It localises to the perinuclear region. The protein localises to the cell projection. The protein resides in the growth cone. Its subcellular location is the membrane. It is found in the axon. It localises to the golgi apparatus. The protein localises to the endosome. The protein resides in the lamellipodium. Regulator of microtubule stability. When phosphorylated by MAPK8, stabilizes microtubules and consequently controls neurite length in cortical neurons. In the developing brain, negatively regulates the rate of exit from multipolar stage and retards radial migration from the ventricular zone. The polypeptide is Stathmin-2 (STMN2) (Homo sapiens (Human)).